Consider the following 315-residue polypeptide: Glutathione synthetase (315 aa).

Residues 125 to 310 (KLYTAWFADL…ITGMLMDAIE (186 aa)) enclose the ATP-grasp domain. 151–207 (WEKHGDIIMKPLDGMGGASIFRVKEGDPNIGVIAETLTELGNRYCMAQNYLPAIKDG) lines the ATP pocket. Glu-281 and Asn-283 together coordinate Mg(2+).

The protein belongs to the prokaryotic GSH synthase family. Mg(2+) is required as a cofactor. It depends on Mn(2+) as a cofactor.

The enzyme catalyses gamma-L-glutamyl-L-cysteine + glycine + ATP = glutathione + ADP + phosphate + H(+). Its pathway is sulfur metabolism; glutathione biosynthesis; glutathione from L-cysteine and L-glutamate: step 2/2. The protein is Glutathione synthetase of Salmonella typhi.